The sequence spans 40 residues: Photosystem II reaction center protein J (40 aa).

Residues 8-28 (IPLWLISTVTGTLVIGLMGIF) traverse the membrane as a helical segment.

The protein belongs to the PsbJ family. PSII is composed of 1 copy each of membrane proteins PsbA, PsbB, PsbC, PsbD, PsbE, PsbF, PsbH, PsbI, PsbJ, PsbK, PsbL, PsbM, PsbT, PsbX, PsbY, PsbZ, Psb30/Ycf12, at least 3 peripheral proteins of the oxygen-evolving complex and a large number of cofactors. It forms dimeric complexes.

The protein resides in the plastid. The protein localises to the chloroplast thylakoid membrane. Functionally, one of the components of the core complex of photosystem II (PSII). PSII is a light-driven water:plastoquinone oxidoreductase that uses light energy to abstract electrons from H(2)O, generating O(2) and a proton gradient subsequently used for ATP formation. It consists of a core antenna complex that captures photons, and an electron transfer chain that converts photonic excitation into a charge separation. The polypeptide is Photosystem II reaction center protein J (Ginkgo biloba (Ginkgo)).